The following is a 718-amino-acid chain: Receptor-like protein 36 (718 aa).

Positions 1-26 are cleaved as a signal peptide; it reads MIRSLSYCFLTIYFFLSILPLPNTIA. Residues 27–695 are Extracellular-facing; it reads CPTRLLCRSD…SESEDQLLNW (669 aa). LRR repeat units lie at residues 70 to 94, 95 to 118, 120 to 141, 143 to 165, 166 to 188, 189 to 213, 214 to 238, 239 to 261, 262 to 286, 288 to 310, 312 to 334, 335 to 359, 360 to 383, 384 to 406, 407 to 431, 433 to 454, 455 to 480, and 481 to 505; these read DAILGELVLSRCKLQGEIPSSIGNL, SHLTYLDLSNNQLVGEVPASIGNL, QLESMRLWDNDLKGNIPTSFAN, TKLSELYLFGNQFTGGDTVLANL, TSLSIIDLSLNYFKSSISADLSG, LHNLERFSVYNNSFSGPFPLSLLMI, PSLVHIDLSQNHFEGPIDFRNTFSL, SRLRVLYVGFNNLDGLIPESISK, LVNLEYLDVSHNNFGGQVPRSISKV, NLTSVDLSYNKLEGQVPDFVWRS, KLDYVDLSYNSFNCFAKSVEVID, GASLTMLNLGSNSVDGPFPKWICKV, KDLYALDLSNNHFNGSIPQCLKYS, TYFHTLNLRNNSLSGVLPNLFIK, DSQLRSLDVSSNNLVGKLPKSLINC, RIEFLNVKGNKIMDTFPFWLGS, LPYLKVLMLGSNAFYGPVYNPSAYLG, and FPSIRIIDISNNNFVGSLPQDYFAN. Asparagine 93 is a glycosylation site (N-linked (GlcNAc...) asparagine). N-linked (GlcNAc...) asparagine glycans are attached at residues asparagine 141 and asparagine 164. A glycan (N-linked (GlcNAc...) asparagine) is linked at asparagine 199. N-linked (GlcNAc...) asparagine glycosylation occurs at asparagine 288. N-linked (GlcNAc...) asparagine glycans are attached at residues asparagine 373 and asparagine 393. N-linked (GlcNAc...) asparagine glycosylation is present at asparagine 528. LRR repeat units follow at residues 550-574, 575-598, 599-622, and 624-647; these read FEGFNAIDFSGNRFSGHIPGSIGLL, SELRLLNLSGNAFTGNIPPSLANI, TNLESLDLSRNNLSGEIPISLGKL, and FLSNTNFSYNHLEGLIPQSTQFAT. Asparagine 581, asparagine 597, asparagine 610, asparagine 629, and asparagine 649 each carry an N-linked (GlcNAc...) asparagine glycan. The helical transmembrane segment at 696-716 threads the bilayer; sequence IAAAIAFGPGMFCGLVIGHIF. Topologically, residues 717–718 are cytoplasmic; sequence TS.

The protein belongs to the RLP family.

It is found in the cell membrane. In Arabidopsis thaliana (Mouse-ear cress), this protein is Receptor-like protein 36.